A 206-amino-acid chain; its full sequence is LexA repressor (206 aa).

The H-T-H motif DNA-binding region spans 28–48; it reads RAEIARRLGFKSANAAEEHLK. Residues serine 123 and lysine 160 each act as for autocatalytic cleavage activity in the active site.

This sequence belongs to the peptidase S24 family. As to quaternary structure, homodimer.

The enzyme catalyses Hydrolysis of Ala-|-Gly bond in repressor LexA.. In terms of biological role, represses a number of genes involved in the response to DNA damage (SOS response), including recA and lexA. In the presence of single-stranded DNA, RecA interacts with LexA causing an autocatalytic cleavage which disrupts the DNA-binding part of LexA, leading to derepression of the SOS regulon and eventually DNA repair. This chain is LexA repressor, found in Shewanella halifaxensis (strain HAW-EB4).